A 267-amino-acid polypeptide reads, in one-letter code: Triosephosphate isomerase (267 aa).

A substrate-binding site is contributed by 12–14 (NWK). Residue His-104 is the Electrophile of the active site. The Proton acceptor role is filled by Glu-176. Substrate-binding positions include Gly-182, Ser-222, and 243–244 (GG).

It belongs to the triosephosphate isomerase family. In terms of assembly, homodimer.

The protein localises to the cytoplasm. The enzyme catalyses D-glyceraldehyde 3-phosphate = dihydroxyacetone phosphate. Its pathway is carbohydrate biosynthesis; gluconeogenesis. The protein operates within carbohydrate degradation; glycolysis; D-glyceraldehyde 3-phosphate from glycerone phosphate: step 1/1. Functionally, involved in the gluconeogenesis. Catalyzes stereospecifically the conversion of dihydroxyacetone phosphate (DHAP) to D-glyceraldehyde-3-phosphate (G3P). The protein is Triosephosphate isomerase of Bifidobacterium longum (strain DJO10A).